A 524-amino-acid chain; its full sequence is DEAD-box ATP-dependent RNA helicase CshA (524 aa).

Residues 1–29 (MKFNELNLSADLLAEIEKAGFVEASPIQE) carry the Q motif motif. The 171-residue stretch at 32-202 (IPLALEGKDV…VQFMKAPEHV (171 aa)) folds into the Helicase ATP-binding domain. 45–52 (AQTGTGKT) lines the ATP pocket. The DEAD box motif lies at 150-153 (DEAD). The Helicase C-terminal domain maps to 213–373 (LVDQYYIRVK…GLKPASVEES (161 aa)). The tract at residues 440 to 524 (EKPLPFKPSG…GFVIRNKGDK (85 aa)) is disordered. The span at 463 to 498 (RRGDDRRERDRRGNGRRDEFKKGSRGNDRFDKEKRY) shows a compositional bias: basic and acidic residues.

This sequence belongs to the DEAD box helicase family. CshA subfamily. Oligomerizes, may be a member of the RNA degradosome.

Its subcellular location is the cytoplasm. It catalyses the reaction ATP + H2O = ADP + phosphate + H(+). DEAD-box RNA helicase possibly involved in RNA degradation. Unwinds dsRNA in both 5'- and 3'-directions, has RNA-dependent ATPase activity. This chain is DEAD-box ATP-dependent RNA helicase CshA, found in Streptococcus pneumoniae serotype 4 (strain ATCC BAA-334 / TIGR4).